Reading from the N-terminus, the 311-residue chain is Cytosolic Fe-S cluster assembly factor Nubp1 homolog (311 aa).

Residues Cys9, Cys23, Cys26, and Cys32 each contribute to the [4Fe-4S] cluster site. 63–70 (GKGGVGKS) contacts ATP. 2 residues coordinate [4Fe-4S] cluster: Cys240 and Cys243.

Belongs to the Mrp/NBP35 ATP-binding proteins family. NUBP1/NBP35 subfamily. Heterotetramer of 2 Nubp1 and 2 Nubp2 chains. The cofactor is [4Fe-4S] cluster.

The protein resides in the cytoplasm. Component of the cytosolic iron-sulfur (Fe/S) protein assembly (CIA) machinery. Required for maturation of extramitochondrial Fe-S proteins. The Nubp1-Nubp2 heterotetramer forms a Fe-S scaffold complex, mediating the de novo assembly of an Fe-S cluster and its transfer to target apoproteins. The sequence is that of Cytosolic Fe-S cluster assembly factor Nubp1 homolog from Drosophila yakuba (Fruit fly).